The chain runs to 239 residues: Small ribosomal subunit protein eS1 (239 aa).

A disordered region spans residues 1–24 (MAIQPPGSYPQGNKKGKAKKKSGQ).

Belongs to the eukaryotic ribosomal protein eS1 family. In terms of assembly, component of the small ribosomal subunit. Mature ribosomes consist of a small (40S) and a large (60S) subunit. The 40S subunit contains about 33 different proteins and 1 molecule of RNA (18S). The 60S subunit contains about 49 different proteins and 3 molecules of RNA (25S, 5.8S and 5S).

Its subcellular location is the cytoplasm. The sequence is that of Small ribosomal subunit protein eS1 from Encephalitozoon cuniculi (strain GB-M1) (Microsporidian parasite).